The chain runs to 527 residues: Peptide chain release factor 3 (527 aa).

A tr-type G domain is found at 9–277 (AKRRTFAIIS…CIVDWAPQPL (269 aa)). GTP contacts are provided by residues 18 to 25 (SHPDAGKT), 86 to 90 (DTPGH), and 140 to 143 (NKLD).

Belongs to the TRAFAC class translation factor GTPase superfamily. Classic translation factor GTPase family. PrfC subfamily.

It localises to the cytoplasm. In terms of biological role, increases the formation of ribosomal termination complexes and stimulates activities of RF-1 and RF-2. It binds guanine nucleotides and has strong preference for UGA stop codons. It may interact directly with the ribosome. The stimulation of RF-1 and RF-2 is significantly reduced by GTP and GDP, but not by GMP. The chain is Peptide chain release factor 3 from Pseudomonas aeruginosa (strain LESB58).